We begin with the raw amino-acid sequence, 71 residues long: Translation initiation factor IF-1 (71 aa).

In terms of domain architecture, S1-like spans 1–71 (MAKQAAIEQD…LTKARITYRY (71 aa)).

Belongs to the IF-1 family. As to quaternary structure, component of the 30S ribosomal translation pre-initiation complex which assembles on the 30S ribosome in the order IF-2 and IF-3, IF-1 and N-formylmethionyl-tRNA(fMet); mRNA recruitment can occur at any time during PIC assembly.

It is found in the cytoplasm. Functionally, one of the essential components for the initiation of protein synthesis. Stabilizes the binding of IF-2 and IF-3 on the 30S subunit to which N-formylmethionyl-tRNA(fMet) subsequently binds. Helps modulate mRNA selection, yielding the 30S pre-initiation complex (PIC). Upon addition of the 50S ribosomal subunit IF-1, IF-2 and IF-3 are released leaving the mature 70S translation initiation complex. This chain is Translation initiation factor IF-1, found in Christiangramia forsetii (strain DSM 17595 / CGMCC 1.15422 / KT0803) (Gramella forsetii).